The primary structure comprises 128 residues: Large ribosomal subunit protein bL20c (128 aa).

Belongs to the bacterial ribosomal protein bL20 family.

The protein resides in the plastid. The protein localises to the chloroplast. Binds directly to 23S ribosomal RNA and is necessary for the in vitro assembly process of the 50S ribosomal subunit. It is not involved in the protein synthesizing functions of that subunit. This is Large ribosomal subunit protein bL20c from Daucus carota (Wild carrot).